We begin with the raw amino-acid sequence, 388 residues long: Ribonuclease D (388 aa).

Positions 24–191 (QYVSDEASLN…LYPQLADKLK (168 aa)) constitute a 3'-5' exonuclease domain. The HRDC domain occupies 230 to 310 (TEHQLAYLKV…QTADLSNPPE (81 aa)).

Belongs to the RNase D family. It depends on a divalent metal cation as a cofactor.

The protein localises to the cytoplasm. The catalysed reaction is Exonucleolytic cleavage that removes extra residues from the 3'-terminus of tRNA to produce 5'-mononucleotides.. Exonuclease involved in the 3' processing of various precursor tRNAs. Initiates hydrolysis at the 3'-terminus of an RNA molecule and releases 5'-mononucleotides. The protein is Ribonuclease D of Shewanella sp. (strain ANA-3).